The chain runs to 442 residues: Tubulin beta chain (442 aa).

The GTP site is built by Q11, E69, S138, G142, T143, G144, N204, and N226. E69 contributes to the Mg(2+) binding site.

The protein belongs to the tubulin family. Dimer of alpha and beta chains. A typical microtubule is a hollow water-filled tube with an outer diameter of 25 nm and an inner diameter of 15 nM. Alpha-beta heterodimers associate head-to-tail to form protofilaments running lengthwise along the microtubule wall with the beta-tubulin subunit facing the microtubule plus end conferring a structural polarity. Microtubules usually have 13 protofilaments but different protofilament numbers can be found in some organisms and specialized cells. Mg(2+) serves as cofactor.

The protein localises to the cytoplasm. Its subcellular location is the cytoskeleton. Its function is as follows. Tubulin is the major constituent of microtubules, a cylinder consisting of laterally associated linear protofilaments composed of alpha- and beta-tubulin heterodimers. Microtubules grow by the addition of GTP-tubulin dimers to the microtubule end, where a stabilizing cap forms. Below the cap, tubulin dimers are in GDP-bound state, owing to GTPase activity of alpha-tubulin. This is Tubulin beta chain (bPT2) from Paramecium tetraurelia.